Here is a 325-residue protein sequence, read N- to C-terminus: Hydroxymethylglutaryl-CoA lyase, mitochondrial (325 aa).

The transit peptide at 1-27 directs the protein to the mitochondrion; that stretch reads MATVKKVLPRRLVGLATLRAVSTSSVG. In terms of domain architecture, Pyruvate carboxyltransferase spans 33–300; the sequence is VKIVEVGPRD…HTGVNLQKLL (268 aa). Arg-41 serves as a coordination point for substrate. Asp-42 contributes to the a divalent metal cation binding site. Lys-48 is subject to N6-acetyllysine; alternate. The residue at position 48 (Lys-48) is an N6-succinyllysine; alternate. Lys-111 is modified (N6-acetyllysine). Residues Lys-137 and Lys-179 each carry the N6-acetyllysine; alternate modification. An N6-succinyllysine; alternate mark is found at Lys-137 and Lys-179. Residues His-233 and His-235 each contribute to the a divalent metal cation site. Cys-266 is an active-site residue. Asn-275 provides a ligand contact to a divalent metal cation. The short motif at 323-325 is the Microbody targeting signal element; that stretch reads CKL. The residue at position 324 (Lys-324) is an N6-acetyllysine.

The protein belongs to the HMG-CoA lyase family. As to quaternary structure, homodimer; disulfide-linked. Can also form homotetramers.

It localises to the mitochondrion matrix. Its subcellular location is the peroxisome. It catalyses the reaction (3S)-3-hydroxy-3-methylglutaryl-CoA = acetoacetate + acetyl-CoA. Its pathway is metabolic intermediate metabolism; (S)-3-hydroxy-3-methylglutaryl-CoA degradation; acetoacetate from (S)-3-hydroxy-3-methylglutaryl-CoA: step 1/1. Mitochondrial 3-hydroxy-3-methylglutaryl-CoA lyase that catalyzes a cation-dependent cleavage of (S)-3-hydroxy-3-methylglutaryl-CoA into acetyl-CoA and acetoacetate, a key step in ketogenesis. Terminal step in leucine catabolism. Ketone bodies (beta-hydroxybutyrate, acetoacetate and acetone) are essential as an alternative source of energy to glucose, as lipid precursors and as regulators of metabolism. This Bos taurus (Bovine) protein is Hydroxymethylglutaryl-CoA lyase, mitochondrial (HMGCL).